The following is a 635-amino-acid chain: Ankyrin repeat and SOCS box protein 2 (635 aa).

The interval 8 to 16 is required for FLNA degradation; it reads RGSQCTIGQ. Residues 26-45 enclose the UIM domain; that stretch reads SEDELVQMAIEQSLADKTRG. ANK repeat units lie at residues 104 to 133, 137 to 167, 171 to 200, 204 to 233, 237 to 266, 270 to 299, 303 to 332, 336 to 365, 368 to 397, 410 to 439, 440 to 469, and 476 to 504; these read APADPLIKAIKDGDEEALKTMIKEGKNLAE, EGWLPLHEAAYYGQVGCLKVLQRAYPGTIDQ, QEETAVYLATCRGHLDCLLSLLQAGAEPDI, SRETPLYKACERKNAEAVKILVQHNADTNH, RGWTALHESVSRNDLEVMQILVSGGAKVES, YGITPLFVAAQSGQLEALRFLAKYGADINT, DNASALYEACKNEHEEVVEFLLSQGADANK, DGLLPLHIASKKGNYRIVQMLLPVTSRTRI, SGVSPLHLAAERNHDEVLEALLSARFDVNT, RRSSALYFAVVNNNVYATELLLQHGADPNR, DVISPLLVAIRHGCLRTMQLLLDHGANIDA, and TAFPATIMFAMKCLSLLKFLMDLGCDGEP. S371 carries the post-translational modification Phosphoserine; by MAPK. An SOCS box domain is found at 586-635; sequence IKEKAEPPRPLAHLCRLRVRKAIGKYRIKLLDTLPLPGRLIRYLKYENTQ.

The protein belongs to the ankyrin SOCS box (ASB) family. Component of a probable ECS E3 ubiquitin-protein ligase complex which contains CUL5, either RBX1 or RNF7/RBX2, Elongin BC complex (ELOB and ELOC) and ASB2. Interacts with SKP2. Through its interaction with SKP2, likely to bridge the formation of dimeric E3-ubiquitin-protein ligase complexes composed of an ECS complex and an SCF(SKP2) complex. Interacts with JAK2; the interaction targets JAK2 for Notch-mediated proteasomal degradation. Interacts with TCF3/E2A; the interaction is mediated by SKP2 and targets TCF3 for Notch-mediated proteasomal degradation. As to quaternary structure, interacts with DES. In terms of processing, monoubiquitinated. Not monoubiquitinated. Post-translationally, phosphorylation at Ser-371 is required for association with FLNA and subsequent FLNA degradation. Expressed in muscle cells. As to expression, expressed in hematopoietic cells.

The protein localises to the cytoplasm. It localises to the cytoskeleton. Its subcellular location is the stress fiber. The protein resides in the myofibril. It is found in the sarcomere. The protein localises to the z line. It participates in protein modification; protein ubiquitination. Its function is as follows. Substrate-recognition component of a SCF-like ECS (Elongin-Cullin-SOCS-box protein) E3 ubiquitin-protein ligase complex which mediates the ubiquitination and subsequent proteasomal degradation of target proteins. Mediates Notch-induced ubiquitination and degradation of substrates including TCF3/E2A and JAK2. Required during embryonic heart development for complete heart looping. Required for cardiomyocyte differentiation. Specifically promotes the ubiquitination of SMAD9 and targets it for proteasomal degradation, leading to avoid excessive accumulation of SMAD9. Plays a role in the regulation of NK-cell migration by modulating protein levels of filamin A/FLNA via regulation of its ubiquitination and proteasome degradation. Functionally, involved in myogenic differentiation and targets filamin FLNB for proteasomal degradation but not filamin FLNA. Also targets DES for proteasomal degradation. Acts as a negative regulator of skeletal muscle mass. Targets filamins FLNA and FLNB for proteasomal degradation. This leads to enhanced adhesion of hematopoietic cells to fibronectin. Required for FLNA degradation in immature cardiomyocytes which is necessary for actin cytoskeleton remodeling, leading to proper organization of myofibrils and function of mature cardiomyocytes. Required for degradation of FLNA and FLNB in immature dendritic cells (DC) which enhances immature DC migration by promoting DC podosome formation and DC-mediated degradation of the extracellular matrix. Does not promote proteasomal degradation of tyrosine-protein kinases JAK1 or JAK2 in hematopoietic cells. The chain is Ankyrin repeat and SOCS box protein 2 (ASB2) from Homo sapiens (Human).